Here is a 33-residue protein sequence, read N- to C-terminus: Photosystem II reaction center protein Psb30 (33 aa).

The helical transmembrane segment at 5–25 threads the bilayer; the sequence is LIVQLGSLTLITIAGPLIVAL.

Belongs to the Psb30/Ycf12 family. In terms of assembly, PSII is composed of 1 copy each of membrane proteins PsbA, PsbB, PsbC, PsbD, PsbE, PsbF, PsbH, PsbI, PsbJ, PsbK, PsbL, PsbM, PsbT, PsbY, PsbZ, Psb30/Ycf12, peripheral proteins of the oxygen-evolving complex and a large number of cofactors. It forms dimeric complexes.

The protein resides in the plastid. Its subcellular location is the chloroplast thylakoid membrane. Its function is as follows. A core subunit of photosystem II (PSII), probably helps stabilize the reaction center. The polypeptide is Photosystem II reaction center protein Psb30 (Euglena mutabilis).